The following is a 516-amino-acid chain: Maturase K (516 aa).

It belongs to the intron maturase 2 family. MatK subfamily.

The protein resides in the plastid. It localises to the chloroplast. Usually encoded in the trnK tRNA gene intron. Probably assists in splicing its own and other chloroplast group II introns. In Galanthus nivalis (Common snowdrop), this protein is Maturase K.